Here is a 144-residue protein sequence, read N- to C-terminus: Maximins 3/H11 type 2 (144 aa).

Residues 1-18 (MHFKYIVAVSFLIASAYA) form the signal peptide. 2 propeptides span residues 19-43 (RSVQ…REIR) and 73-122 (RTAE…KKEK). Ile143 is subject to Isoleucine amide.

Belongs to the bombinin family. In terms of tissue distribution, expressed by the skin glands.

Its subcellular location is the secreted. Its function is as follows. Maximin-3 shows antibacterial activity against both Gram-positive and Gram-negative bacteria. It also shows antimicrobial activity against the fungus C.albicans, but not against A.flavus nor P.uticale. It has little hemolytic activity. It possess a significant cytotoxicity against tumor cell lines. It possess a significant anti-HIV activity. It shows high spermicidal activity. Maximin-H11 shows antimicrobial activity against bacteria and against the fungus C.albicans. Shows strong hemolytic activity. The protein is Maximins 3/H11 type 2 of Bombina maxima (Giant fire-bellied toad).